A 76-amino-acid polypeptide reads, in one-letter code: MAYIFALIFAFVVCINTDVIQAEEIQHDTLRNMEYRLSCTPKNSECERMTDICCPGFQCLGCNPYDKNDVNKCKCQ.

The signal sequence occupies residues 1–22 (MAYIFALIFAFVVCINTDVIQA).

The protein belongs to the scoloptoxin-13 family. Post-translationally, contains 4 disulfide bonds. In terms of tissue distribution, expressed by the venom gland.

It is found in the secreted. The polypeptide is U-scoloptoxin(13)-Sa1a (Scolopendra alternans (Florida Keys giant centipede)).